The following is a 320-amino-acid chain: Polyprenal reductase 1 (320 aa).

A run of 6 helical transmembrane segments spans residues 5 to 25 (IVWLVKAAWITVWIVSILPLV), 64 to 84 (FFGHFYVVGVVWTTLLLAATW), 143 to 163 (MHILAYVGALFYYVAAPLSLC), 200 to 220 (PLMKLGSLQWIGGAIFLWGWI), 243 to 263 (IIPYGDWFEMVSCPHFLAEIV), and 266 to 286 (LGLLISSGGTDISIWLLFGFV).

It belongs to the steroid 5-alpha reductase family. Polyprenal reductase subfamily. In terms of tissue distribution, expressed in roots and flowers.

Its subcellular location is the cell membrane. The catalysed reaction is a di-trans,poly-cis-dolichal + NADP(+) = a di-trans,poly-cis-polyprenal + NADPH + H(+). It participates in protein modification; protein glycosylation. Plays a key role in early steps of protein N-linked glycosylation by being involved in the conversion of polyprenol into dolichol. Acts as a polyprenal reductase that mediates the reduction of polyprenal into dolichal in a NADP-dependent mechanism. Dolichols are required for the synthesis of dolichol-linked monosaccharides and the oligosaccharide precursor used for N-glycosylation. Involved in the regulation of plant growth and reproductive processes. The chain is Polyprenal reductase 1 from Arabidopsis thaliana (Mouse-ear cress).